A 236-amino-acid polypeptide reads, in one-letter code: 3-deoxy-D-manno-octulosonic acid kinase (236 aa).

D167 is a catalytic residue.

The protein belongs to the protein kinase superfamily. KdkA/RfaP family.

It is found in the cell inner membrane. It catalyses the reaction an alpha-Kdo-(2-&gt;6)-lipid IVA + ATP = a 4-O-phospho-alpha-Kdo-(2-&gt;6)-lipid IVA + ADP + H(+). Its pathway is bacterial outer membrane biogenesis; LPS core biosynthesis. Its function is as follows. Catalyzes the ATP-dependent phosphorylation of the 3-deoxy-D-manno-octulosonic acid (Kdo) residue in Kdo-lipid IV(A) at the 4-OH position. The protein is 3-deoxy-D-manno-octulosonic acid kinase of Vibrio vulnificus (strain YJ016).